The sequence spans 1705 residues: Intersectin-1 (1705 aa).

EH domains are found at residues 21 to 109 (ERAK…PVAM) and 220 to 309 (SRLK…SFRR). EF-hand domains lie at 53 to 88 (LPQP…IKLK) and 253 to 288 (LPQS…IDVA). D66, N68, D70, R72, E77, D266, D268, D270, K272, and E277 together coordinate Ca(2+). Disordered stretches follow at residues 322–355 (VSVD…KREN), 386–433 (RAEQ…ERRE), and 668–708 (RYKF…PPEP). The interval 325 to 697 (DQRLPEEPEE…VEKKPEIQEK (373 aa)) is KLERQ. Basic and acidic residues predominate over residues 339–355 (NADKKLPVTFEDKKREN). Residues 350–687 (DKKRENFERG…KREESIQKCE (338 aa)) are a coiled coil. A compositionally biased stretch (basic and acidic residues) spans 668-699 (RYKFQDEEKEKREESIQKCEVEKKPEIQEKPN). An SH3 1 domain is found at 732–793 (VKVVYYRALY…PANYAERMPE (62 aa)). Over residues 823–833 (AFTNTSTNSNN) the composition is skewed to low complexity. The tract at residues 823–851 (AFTNTSTNSNNWADFSSTWPTNNTDKVES) is disordered. Residues 834–846 (WADFSSTWPTNNT) show a composition bias toward polar residues. An SH3 2 domain is found at 897–955 (VEGLQAQALYPWRAKKDNHLNFNKNDVITVLEQQDMWWFGEVQGQKGWFPKSYVKLISG). A disordered region spans residues 959-978 (KSTSIDSTSSESPASLKRVS). Over residues 960-973 (STSIDSTSSESPAS) the composition is skewed to low complexity. 3 consecutive SH3 domains span residues 986 to 1044 (IQGE…PKDS), 1058 to 1122 (KKPE…LLSP), and 1139 to 1198 (PPTC…LTTD). The short motif at 1088–1111 (RKKNPGGWWEGELQARGKKRQIGW) is the Bipartite nuclear localization signal; in isoform 2 element. Residues 1221–1407 (KRQGYIHELI…EELCSQVNEG (187 aa)) form the DH domain. Positions 1446-1555 (KFLHSGKLYK…WVQKIKAASE (110 aa)) constitute a PH domain. The region spanning 1563–1679 (KKREKAYLVR…KKDQGSKGPV (117 aa)) is the C2 domain. Residues D1651, S1654, and D1657 each contribute to the Ca(2+) site.

Binds epn1 and epn2. Requires Ca(2+) as cofactor.

The protein resides in the endomembrane system. It is found in the synapse. The protein localises to the synaptosome. It localises to the cell projection. Its subcellular location is the lamellipodium. The protein resides in the cell membrane. It is found in the membrane. The protein localises to the clathrin-coated pit. It localises to the recycling endosome. Its subcellular location is the cytoplasm. The protein resides in the nucleus envelope. Its function is as follows. Adapter protein that provides a link between the endocytic membrane traffic and the actin assembly machinery. Acts as a guanine nucleotide exchange factor (GEF) for cdc42, and thereby stimulates actin nucleation mediated by wasl and the arp2/3 complex. Involved in endocytosis of activated egfr, and probably also other growth factor receptors. The sequence is that of Intersectin-1 (itsn1) from Xenopus laevis (African clawed frog).